Consider the following 359-residue polypeptide: S-geranylgeranyl-glutathione receptor P2RY8 (359 aa).

Residues 1-19 (MQVPNSTGPDNATLQMLRN) are Extracellular-facing. 2 N-linked (GlcNAc...) asparagine glycosylation sites follow: N5 and N11. A helical membrane pass occupies residues 20-40 (PAIAVALPVVYSLVAAVSIPG). Residues 41–57 (NLFSLWVLCRRMGPRSP) lie on the Cytoplasmic side of the membrane. Residues 58–78 (SVIFMINLSVTDLMLASVLPF) traverse the membrane as a helical segment. The Extracellular segment spans residues 79–88 (QIYYHCNRHH). The chain crosses the membrane as a helical span at residues 89–109 (WVFGVLLCNVVTVAFYANMYS). The Cytoplasmic portion of the chain corresponds to 110–138 (SILTMTCISVERFLGVLYPLSSKRWRRRR). Residues 139 to 159 (YAVAACAGTWLLLLTALSPLA) form a helical membrane-spanning segment. Residues 160–187 (RTDLTYPVHALGIITCFDVLKWTMLPSV) are Extracellular-facing. Residues 188-208 (AMWAVFLFTIFILLFLIPFVI) form a helical membrane-spanning segment. Residues 209–237 (TVACYTATILKLLRTEEAHGREQRRRAVG) are Cytoplasmic-facing. Residues 238 to 258 (LAAVVLLAFVTCFAPNNFVLL) form a helical membrane-spanning segment. The Extracellular segment spans residues 259-275 (AHIVSRLFYGKSYYHVY). The chain crosses the membrane as a helical span at residues 276–296 (KLTLCLSCLNNCLDPFVYYFA). Topologically, residues 297-359 (SREFQLRLRE…PGLQRQESVF (63 aa)) are cytoplasmic. Residues 329–359 (RTTSVRSEAGAHPEGMEGATRPGLQRQESVF) are disordered.

The protein belongs to the G-protein coupled receptor 1 family. In terms of tissue distribution, barely detectable in normal blood leukocytes. Weaker expression was seen in heart, kidney and lung. Not detected in brain. Expressed in B cells and follicular helper T cells in germinal centers (at protein level).

It localises to the cell membrane. Its function is as follows. G protein-coupled receptor for S-geranylgeranyl-glutathione (GGG), an endogenous metabolite present in lymphoid tissues. Couples the binding of GGG to the activation of GNA13 and downstream repression of AKT activation in lymphocytes defining their positioning and growth within lymphoid organs. In lymphoid follicles, confines B cells and follicular helper T cells in germinal centers (GCs) in response to GGG local gradients established by GGT5 (via GGG catabolism) and ABCC1 (via extracellular transport) with lower concentrations of GGG found in the follicular dendritic cell network region around which germinal centers are formed. In the bone marrow, also in response to GGG gradients established by GGT5 and ABCC1, it restricts chemotactic transmigration of B cells, T cells and NK cells from blood vessels to the bone marrow parenchyma. Contributes to GNA13-dependent pathway that suppresses GC B cell growth. The protein is S-geranylgeranyl-glutathione receptor P2RY8 of Homo sapiens (Human).